The chain runs to 363 residues: Flagellar P-ring protein (363 aa).

The signal sequence occupies residues 1 to 20 (MKYRLIVALAMLVLSLPSQA).

Belongs to the FlgI family. As to quaternary structure, the basal body constitutes a major portion of the flagellar organelle and consists of four rings (L,P,S, and M) mounted on a central rod.

Its subcellular location is the periplasm. The protein localises to the bacterial flagellum basal body. Its function is as follows. Assembles around the rod to form the L-ring and probably protects the motor/basal body from shearing forces during rotation. The sequence is that of Flagellar P-ring protein from Shewanella sp. (strain ANA-3).